The following is a 184-amino-acid chain: Chaperone protein YcdY (184 aa).

This sequence belongs to the TorD/DmsD family. In terms of assembly, interacts with YcdX.

Acts as a chaperone that increases YcdX activity, maybe by facilitating the correct insertion of the zinc ions into the catalytic site of YcdX. Involved in the swarming motility process. The chain is Chaperone protein YcdY (ycdY) from Escherichia coli (strain K12).